Consider the following 240-residue polypeptide: MLPFLIALQFLSSLPVSLPGMPAAREVGRSLLYYPLVGLLFGLLLWLASHLLQGTPAPLHAALLLTAWVLLSGALHLDGLADSADAWLGGFGDRERTLQIMKDPRSGPIAVVTLVLVLLLKFCALWVLVEQGVGAQLLLAPLIGRTAMLGLFLCTPYVRPGGLGQALAEHLPRRAAGWVLLCCALFCLLLGGWVVLLAVAVFAWLRHLMYRRLGGATGDTAGALLELLELAVVLGLALGL.

Helical transmembrane passes span 31–51 (LLYY…ASHL), 57–77 (APLH…ALHL), 109–129 (IAVV…WVLV), 133–153 (VGAQ…GLFL), and 185–205 (LFCL…FAWL).

This sequence belongs to the CobS family. Mg(2+) serves as cofactor.

The protein localises to the cell inner membrane. The enzyme catalyses alpha-ribazole + adenosylcob(III)inamide-GDP = adenosylcob(III)alamin + GMP + H(+). It carries out the reaction alpha-ribazole 5'-phosphate + adenosylcob(III)inamide-GDP = adenosylcob(III)alamin 5'-phosphate + GMP + H(+). It participates in cofactor biosynthesis; adenosylcobalamin biosynthesis; adenosylcobalamin from cob(II)yrinate a,c-diamide: step 7/7. Its function is as follows. Joins adenosylcobinamide-GDP and alpha-ribazole to generate adenosylcobalamin (Ado-cobalamin). Also synthesizes adenosylcobalamin 5'-phosphate from adenosylcobinamide-GDP and alpha-ribazole 5'-phosphate. This is Adenosylcobinamide-GDP ribazoletransferase from Pseudomonas putida (strain GB-1).